Here is a 100-residue protein sequence, read N- to C-terminus: Putative pterin-4-alpha-carbinolamine dehydratase (100 aa).

Belongs to the pterin-4-alpha-carbinolamine dehydratase family.

The catalysed reaction is (4aS,6R)-4a-hydroxy-L-erythro-5,6,7,8-tetrahydrobiopterin = (6R)-L-erythro-6,7-dihydrobiopterin + H2O. The protein is Putative pterin-4-alpha-carbinolamine dehydratase of Allorhizobium ampelinum (strain ATCC BAA-846 / DSM 112012 / S4) (Agrobacterium vitis (strain S4)).